The sequence spans 259 residues: MAAASSPREENVYLAKLAEQAERYEEMVEFMEKVVAAADGGEELTIEERNLLSVAYKNVIGARRASWRIISSIEQKEESRGNEGHVSTIRDYRSKIESELSSICDGILKVLDSKLIGSASGGDSKVFYLKMKGDYYRYLAEFKTGDERKLAAENTLSAYKAAQDIANAELAPTHPIRLGLALNFSVFYYEILNSPDRACNLAKQAFDEAIAELDTLGEDSYKDSTLIMQLLRDNLTLWTSDMQDDTAEEVKEAPKPDDQ.

The protein belongs to the 14-3-3 family.

This Helianthus annuus (Common sunflower) protein is 14-3-3-like protein.